The chain runs to 292 residues: Succinate dehydrogenase assembly factor 2, mitochondrial (292 aa).

Disordered regions lie at residues 27 to 68 (RSFG…NTTS) and 266 to 292 (TGFHAAKSKKTGGAGLGRMPNVQVFDS). The span at 55–68 (TNRPPNQHVPNTTS) shows a compositional bias: polar residues.

It belongs to the SDHAF2 family. In terms of assembly, interacts with the flavoprotein subunit within the SDH catalytic dimer.

The protein localises to the mitochondrion matrix. Its function is as follows. Plays an essential role in the assembly of succinate dehydrogenase (SDH), an enzyme complex (also referred to as respiratory complex II) that is a component of both the tricarboxylic acid (TCA) cycle and the mitochondrial electron transport chain, and which couples the oxidation of succinate to fumarate with the reduction of ubiquinone (coenzyme Q) to ubiquinol. Required for flavinylation (covalent attachment of FAD) of the flavoprotein subunit of the SDH catalytic dimer. The polypeptide is Succinate dehydrogenase assembly factor 2, mitochondrial (Aspergillus flavus (strain ATCC 200026 / FGSC A1120 / IAM 13836 / NRRL 3357 / JCM 12722 / SRRC 167)).